Reading from the N-terminus, the 598-residue chain is Probable translation initiation factor IF-2 (598 aa).

The 223-residue stretch at 3–225 (LRCPIVSVLG…GLAQKFLEQK (223 aa)) folds into the tr-type G domain. Residues 12 to 19 (GHVDHGKT) are G1. 12 to 19 (GHVDHGKT) is a binding site for GTP. The segment at 37 to 41 (GITQH) is G2. Positions 76–79 (DTPG) are G3. Residues 76-80 (DTPGH) and 130-133 (NKLD) contribute to the GTP site. Residues 130–133 (NKLD) are G4. Residues 200–202 (SAI) are G5.

It belongs to the TRAFAC class translation factor GTPase superfamily. Classic translation factor GTPase family. IF-2 subfamily.

Function in general translation initiation by promoting the binding of the formylmethionine-tRNA to ribosomes. Seems to function along with eIF-2. The sequence is that of Probable translation initiation factor IF-2 from Methanococcus vannielii (strain ATCC 35089 / DSM 1224 / JCM 13029 / OCM 148 / SB).